We begin with the raw amino-acid sequence, 575 residues long: Transcription factor COE2 (575 aa).

The interaction with DNA stretch occupies residues R62–N65. The segment at C150–C169 adopts a C5-type zinc-finger fold. Interaction with DNA regions lie at residues N196 to N203 and N235 to K238. The 84-residue stretch at P253–T336 folds into the IPT/TIG domain. Polar residues predominate over residues S441 to T453. A disordered region spans residues S441–M479. The span at S454–M479 shows a compositional bias: low complexity.

This sequence belongs to the COE family. As to quaternary structure, forms either a homodimer or a heterodimer with a related family member. Interacts with SIX1. As to expression, in adult expressed in olfactory epithelium and at a much lower level in Purkinje cells of the cerebellum. In embryo expressed in epithalamus, in cells near the ventricular zone of mesencephalon and on the ventral surface of rhombencephalon, in the developing vomeronasal organ, at a lower level in developing spinal cord. Not expressed in developing retina, inner ear, dorsal root ganglia, trigeminal ganglia and glossopharyngeal ganglia.

It is found in the nucleus. Functionally, transcription factor that, in osteoblasts, activates the decoy receptor for RANKL, TNFRSF11B, which in turn regulates osteoclast differentiation. Acts in synergy with the Wnt-responsive LEF1/CTNNB1 pathway. Recognizes variations of the palindromic sequence 5'-ATTCCCNNGGGAATT-3'. This is Transcription factor COE2 (Ebf2) from Mus musculus (Mouse).